A 497-amino-acid polypeptide reads, in one-letter code: tRNA (adenine(58)-N(1))-methyltransferase non-catalytic subunit TRM6 (497 aa).

2 disordered regions span residues 1 to 20 (MEGS…DHRI) and 69 to 100 (TSGG…IVDD). Over residues 79-100 (KREEPTAETKEAGTDNRNIVDD) the composition is skewed to basic and acidic residues. 94–104 (NRNIVDDGKSQ) serves as a coordination point for substrate. A Phosphothreonine modification is found at Thr107. Residues 145-154 (KYIKKKKKKY) and 175-182 (REPGKINH) contribute to the substrate site. The interval 276 to 354 (SSEPKDSALV…EKQRRQEEQR (79 aa)) is disordered. Residues Ser298 and Ser305 each carry the phosphoserine modification. Positions 327 to 354 (DPEHKGPKERGSKKDYIQEKQRRQEEQR) are enriched in basic and acidic residues. Substrate is bound by residues Arg349, Arg377, 415-423 (RERGGVINL), and 434-441 (QVLPDRSH). The tract at residues 472–497 (SNASTLESHETEEPAAKKRKCPESDS) is disordered. The span at 478–497 (ESHETEEPAAKKRKCPESDS) shows a compositional bias: basic and acidic residues.

Belongs to the TRM6/GCD10 family. In terms of assembly, heterotetramer; composed of two copies of TRMT6 and two copies of TRMT61A. In terms of tissue distribution, expressed in brain, liver, testis and ovary.

The protein localises to the nucleus. Substrate-binding subunit of tRNA (adenine-N(1)-)-methyltransferase, which catalyzes the formation of N(1)-methyladenine at position 58 (m1A58) in initiator methionyl-tRNA. Together with the TRMT61A catalytic subunit, part of a mRNA N(1)-methyltransferase complex that mediates methylation of adenosine residues at the N(1) position of a small subset of mRNAs: N(1) methylation takes place in tRNA T-loop-like structures of mRNAs and is only present at low stoichiometries. This chain is tRNA (adenine(58)-N(1))-methyltransferase non-catalytic subunit TRM6 (TRMT6), found in Homo sapiens (Human).